A 533-amino-acid polypeptide reads, in one-letter code: 2-isopropylmalate synthase (533 aa).

A Pyruvate carboxyltransferase domain is found at 8 to 269 (IIIFDTTLRD…YYNPFLGRPA (262 aa)). Positions 17, 208, 210, and 244 each coordinate Mn(2+). A regulatory domain region spans residues 408–533 (RLELVQVSCG…VSANPAKASL (126 aa)).

It belongs to the alpha-IPM synthase/homocitrate synthase family. LeuA type 1 subfamily. Homodimer. It depends on Mn(2+) as a cofactor.

The protein localises to the cytoplasm. The enzyme catalyses 3-methyl-2-oxobutanoate + acetyl-CoA + H2O = (2S)-2-isopropylmalate + CoA + H(+). It functions in the pathway amino-acid biosynthesis; L-leucine biosynthesis; L-leucine from 3-methyl-2-oxobutanoate: step 1/4. Functionally, catalyzes the condensation of the acetyl group of acetyl-CoA with 3-methyl-2-oxobutanoate (2-ketoisovalerate) to form 3-carboxy-3-hydroxy-4-methylpentanoate (2-isopropylmalate). The sequence is that of 2-isopropylmalate synthase from Picosynechococcus sp. (strain ATCC 27264 / PCC 7002 / PR-6) (Agmenellum quadruplicatum).